The primary structure comprises 294 residues: 4-hydroxy-tetrahydrodipicolinate synthase (294 aa).

Pyruvate is bound at residue Thr44. The active-site Proton donor/acceptor is the Tyr132. Lys161 functions as the Schiff-base intermediate with substrate in the catalytic mechanism. Pyruvate is bound at residue Ile206.

It belongs to the DapA family. As to quaternary structure, homotetramer; dimer of dimers.

It localises to the cytoplasm. It catalyses the reaction L-aspartate 4-semialdehyde + pyruvate = (2S,4S)-4-hydroxy-2,3,4,5-tetrahydrodipicolinate + H2O + H(+). It functions in the pathway amino-acid biosynthesis; L-lysine biosynthesis via DAP pathway; (S)-tetrahydrodipicolinate from L-aspartate: step 3/4. Functionally, catalyzes the condensation of (S)-aspartate-beta-semialdehyde [(S)-ASA] and pyruvate to 4-hydroxy-tetrahydrodipicolinate (HTPA). The chain is 4-hydroxy-tetrahydrodipicolinate synthase from Thermotoga sp. (strain RQ2).